The sequence spans 458 residues: MSTGTVVQVIGAVVDVEFPHDAVPQVYDALEIKSEGLVLEVQQQLGGGVVRTIAMGSSDGLRRGIEVVNTGSPITVPVGSATLGRIMNVLGQPVDEAGPIGEDERYVIHREAPSYEDQSNTTELLETGIKVIDLVCPFAKGGKVGLFGGAGVGKTVNMMELINNIAKAHSGLSVFAGVGERTREGNDFYYEMEESGVLDKVAMVYGQMNEPPGNRLRVALTGLTMAEKFRDEGKDVLLFVDNIYRYTLAGTEVSALLGRMPSAVGYQPTLAEEMGVLQERITSTKTGSITSVQAVYVPADDLTDPSPATTFAHLDATVVLSRNIASLGIYPAVDPLDSTSRQLDPQVVGQEHYDVASGVQNVLQRYKELKDIIAILGMDELSDEDKTTVARARKIEKYLSQPFFVAEVFTGSPGKYVALKDTIRGFKGLLEGEFDHIPEQAFYMAGSIDEVIERANKK.

Gly-148–Thr-155 contacts ATP.

Belongs to the ATPase alpha/beta chains family. In terms of assembly, F-type ATPases have 2 components, CF(1) - the catalytic core - and CF(0) - the membrane proton channel. CF(1) has five subunits: alpha(3), beta(3), gamma(1), delta(1), epsilon(1). CF(0) has three main subunits: a(1), b(2) and c(9-12). The alpha and beta chains form an alternating ring which encloses part of the gamma chain. CF(1) is attached to CF(0) by a central stalk formed by the gamma and epsilon chains, while a peripheral stalk is formed by the delta and b chains.

Its subcellular location is the cell inner membrane. It catalyses the reaction ATP + H2O + 4 H(+)(in) = ADP + phosphate + 5 H(+)(out). Functionally, produces ATP from ADP in the presence of a proton gradient across the membrane. The catalytic sites are hosted primarily by the beta subunits. This Shewanella loihica (strain ATCC BAA-1088 / PV-4) protein is ATP synthase subunit beta.